A 384-amino-acid polypeptide reads, in one-letter code: Mitogen-activated protein kinase homolog 1 (384 aa).

The Protein kinase domain occupies Y32–M319. Residues I38–V46 and K61 contribute to the ATP site. The active-site Proton acceptor is the D158. A Phosphothreonine modification is found at T191. The TXY motif lies at T191–Y193. Y193 bears the Phosphotyrosine mark.

This sequence belongs to the protein kinase superfamily. CMGC Ser/Thr protein kinase family. MAP kinase subfamily. It depends on Mg(2+) as a cofactor. In terms of processing, dually phosphorylated on Thr-191 and Tyr-193, which activates the enzyme. As to expression, expressed in vegetative organs such as leaf, root, or stem. In the reproductive organs, it is found in the ovary, but not in the stamen.

It carries out the reaction L-seryl-[protein] + ATP = O-phospho-L-seryl-[protein] + ADP + H(+). The enzyme catalyses L-threonyl-[protein] + ATP = O-phospho-L-threonyl-[protein] + ADP + H(+). With respect to regulation, activated by tyrosine and threonine phosphorylation. This is Mitogen-activated protein kinase homolog 1 (MPK1) from Petunia hybrida (Petunia).